The sequence spans 461 residues: Vimentin (461 aa).

2 stretches are compositionally biased toward low complexity: residues 1–14 (MNRTTSRQTTSSSS) and 35–52 (SSRQYSSPVRSSRMSYSV). Residues 1–52 (MNRTTSRQTTSSSSYKRMFGGEGRPSVGMARSTLSSRQYSSPVRSSRMSYSV) are disordered. The segment at 1–91 (MNRTTSRQTT…FALSDAINSE (91 aa)) is head. Positions 92–127 (FKANRTNEKAEMQHLNDRFASYIDKVRFLEQQNKIL) are coil 1A. A coiled-coil region spans residues 92–127 (FKANRTNEKAEMQHLNDRFASYIDKVRFLEQQNKIL). Residues 99-407 (EKAEMQHLND…KLLEGEESRI (309 aa)) form the IF rod domain. Positions 128–149 (LAELEQLKGKGASRIGDLYEDE) are linker 1. Residues 150–241 (MRDLRRQVDQ…KLHDEEVAEL (92 aa)) adopt a coiled-coil conformation. A coil 1B region spans residues 150–241 (MRDLRRQVDQ…KLHDEEVAEL (92 aa)). Positions 242 to 264 (QAQIQDQHVQIDMDVAKPDLTAA) are linker 12. A coil 2 region spans residues 265–403 (LRDVRVQYET…ATYRKLLEGE (139 aa)). Positions 299–403 (NRNTDAIRQA…ATYRKLLEGE (105 aa)) form a coiled coil. Positions 404 to 461 (ESRITTPMPNFSSFNLRESMLEARPMIDNLSKKVVIKTIETRDGHVINESTQNHDDLE) are tail.

The protein belongs to the intermediate filament family. In terms of assembly, homomer assembled from elementary dimers. Post-translationally, one of the most prominent phosphoproteins in various cells of mesenchymal origin. Phosphorylation is enhanced during cell division, at which time vimentin filaments are significantly reorganized.

Its subcellular location is the cytoplasm. It localises to the cytoskeleton. The protein localises to the nucleus matrix. Functionally, vimentins are class-III intermediate filaments found in various non-epithelial cells, especially mesenchymal cells. Vimentin is attached to the nucleus, endoplasmic reticulum, and mitochondria, either laterally or terminally. The polypeptide is Vimentin (vim) (Oncorhynchus mykiss (Rainbow trout)).